The sequence spans 136 residues: Protein NrdI (136 aa).

Belongs to the NrdI family.

Functionally, probably involved in ribonucleotide reductase function. This is Protein NrdI from Escherichia coli (strain 55989 / EAEC).